Here is a 484-residue protein sequence, read N- to C-terminus: UDP-N-acetylmuramate--L-alanine ligase (484 aa).

An ATP-binding site is contributed by 122 to 128 (GTHGKTT).

Belongs to the MurCDEF family.

Its subcellular location is the cytoplasm. It catalyses the reaction UDP-N-acetyl-alpha-D-muramate + L-alanine + ATP = UDP-N-acetyl-alpha-D-muramoyl-L-alanine + ADP + phosphate + H(+). Its pathway is cell wall biogenesis; peptidoglycan biosynthesis. Cell wall formation. This chain is UDP-N-acetylmuramate--L-alanine ligase, found in Mycobacterium sp. (strain JLS).